Here is a 434-residue protein sequence, read N- to C-terminus: Methylenetetrahydrofolate--tRNA-(uracil-5-)-methyltransferase TrmFO (434 aa).

9 to 14 is a binding site for FAD; that stretch reads GAGLAG.

It belongs to the MnmG family. TrmFO subfamily. It depends on FAD as a cofactor.

The protein resides in the cytoplasm. The enzyme catalyses uridine(54) in tRNA + (6R)-5,10-methylene-5,6,7,8-tetrahydrofolate + NADH + H(+) = 5-methyluridine(54) in tRNA + (6S)-5,6,7,8-tetrahydrofolate + NAD(+). It carries out the reaction uridine(54) in tRNA + (6R)-5,10-methylene-5,6,7,8-tetrahydrofolate + NADPH + H(+) = 5-methyluridine(54) in tRNA + (6S)-5,6,7,8-tetrahydrofolate + NADP(+). In terms of biological role, catalyzes the folate-dependent formation of 5-methyl-uridine at position 54 (M-5-U54) in all tRNAs. The polypeptide is Methylenetetrahydrofolate--tRNA-(uracil-5-)-methyltransferase TrmFO (Listeria welshimeri serovar 6b (strain ATCC 35897 / DSM 20650 / CCUG 15529 / CIP 8149 / NCTC 11857 / SLCC 5334 / V8)).